The following is a 128-amino-acid chain: Small ribosomal subunit protein uS11 (128 aa).

It belongs to the universal ribosomal protein uS11 family. As to quaternary structure, part of the 30S ribosomal subunit. Interacts with proteins S7 and S18. Binds to IF-3.

In terms of biological role, located on the platform of the 30S subunit, it bridges several disparate RNA helices of the 16S rRNA. Forms part of the Shine-Dalgarno cleft in the 70S ribosome. The chain is Small ribosomal subunit protein uS11 from Wolbachia pipientis subsp. Culex pipiens (strain wPip).